We begin with the raw amino-acid sequence, 115 residues long: Promotilin (115 aa).

Residues 1–25 (MVSRKAVAALLVVHVAAMLASQTEA) form the signal peptide. The segment at 39–72 (QEKERNKGQKKSLSVWQRSGEEGPVDPAEPIREE) is disordered.

This sequence belongs to the motilin family.

It localises to the secreted. In terms of biological role, plays an important role in the regulation of interdigestive gastrointestinal motility and indirectly causes rhythmic contraction of duodenal and colonic smooth muscle. This is Promotilin (MLN) from Homo sapiens (Human).